The sequence spans 412 residues: Chorismate synthase (412 aa).

Arg-40 and Arg-46 together coordinate NADP(+). Residues 134 to 136 (RAS), 255 to 256 (QA), Gly-299, 314 to 318 (KPIAT), and Arg-340 each bind FMN.

Belongs to the chorismate synthase family. As to quaternary structure, homotetramer. FMNH2 is required as a cofactor.

It carries out the reaction 5-O-(1-carboxyvinyl)-3-phosphoshikimate = chorismate + phosphate. It functions in the pathway metabolic intermediate biosynthesis; chorismate biosynthesis; chorismate from D-erythrose 4-phosphate and phosphoenolpyruvate: step 7/7. In terms of biological role, catalyzes the anti-1,4-elimination of the C-3 phosphate and the C-6 proR hydrogen from 5-enolpyruvylshikimate-3-phosphate (EPSP) to yield chorismate, which is the branch point compound that serves as the starting substrate for the three terminal pathways of aromatic amino acid biosynthesis. This reaction introduces a second double bond into the aromatic ring system. In Clavibacter michiganensis subsp. michiganensis (strain NCPPB 382), this protein is Chorismate synthase.